The primary structure comprises 365 residues: D-alanine--D-alanine ligase (365 aa).

Residues 156 to 360 form the ATP-grasp domain; sequence KKLMAAEGLP…YAQLLDNLIE (205 aa). 183-238 provides a ligand contact to ATP; sequence KRELGLPVFVKPARGGSSIGISRVADWSEWDAALSLAREHDSKVIVEAEIVGVEVE. Positions 315, 327, and 329 each coordinate Mg(2+).

This sequence belongs to the D-alanine--D-alanine ligase family. The cofactor is Mg(2+). Requires Mn(2+) as cofactor.

Its subcellular location is the cytoplasm. The enzyme catalyses 2 D-alanine + ATP = D-alanyl-D-alanine + ADP + phosphate + H(+). It participates in cell wall biogenesis; peptidoglycan biosynthesis. Its function is as follows. Cell wall formation. This is D-alanine--D-alanine ligase from Corynebacterium diphtheriae (strain ATCC 700971 / NCTC 13129 / Biotype gravis).